We begin with the raw amino-acid sequence, 598 residues long: NADH-ubiquinone oxidoreductase chain 5 (598 aa).

16 helical membrane passes run 1–21 (MLEL…IFLF), 28–48 (FAES…ILLM), 81–101 (CFFV…FYYM), 115–135 (GLFL…QLLI), 171–191 (GDIG…DWSF), 193–213 (GLYA…LAAA), 233–253 (TPVS…FLLI), 265–285 (IQLM…ICAL), 293–312 (VVAF…VGAG), 323–343 (MHAF…HGLQ), 362–382 (SVCF…AGFF), 399–421 (WAVG…LLYF), 454–474 (VIAG…CLSL), 480–500 (LAAV…VNLL), 509–529 (IPEL…HKLI), and 576–596 (LIKM…GIMI).

Belongs to the complex I subunit 5 family.

The protein localises to the mitochondrion inner membrane. The catalysed reaction is a ubiquinone + NADH + 5 H(+)(in) = a ubiquinol + NAD(+) + 4 H(+)(out). Core subunit of the mitochondrial membrane respiratory chain NADH dehydrogenase (Complex I) that is believed to belong to the minimal assembly required for catalysis. Complex I functions in the transfer of electrons from NADH to the respiratory chain. The immediate electron acceptor for the enzyme is believed to be ubiquinone. The polypeptide is NADH-ubiquinone oxidoreductase chain 5 (ND5) (Branchiostoma lanceolatum (Common lancelet)).